Reading from the N-terminus, the 338-residue chain is Heat-inducible transcription repressor HrcA (338 aa).

Belongs to the HrcA family.

Its function is as follows. Negative regulator of class I heat shock genes (grpE-dnaK-dnaJ and groELS operons). Prevents heat-shock induction of these operons. The protein is Heat-inducible transcription repressor HrcA of Nitrosomonas europaea (strain ATCC 19718 / CIP 103999 / KCTC 2705 / NBRC 14298).